Consider the following 206-residue polypeptide: 2,3-bisphosphoglycerate-dependent phosphoglycerate mutase (206 aa).

Substrate-binding positions include 9–16 (RHGQSEWN), 22–23 (TG), Arg-61, 88–91 (ERDY), Lys-99, 115–116 (RR), and 159–160 (GN). His-10 acts as the Tele-phosphohistidine intermediate in catalysis. Catalysis depends on Glu-88, which acts as the Proton donor/acceptor.

It belongs to the phosphoglycerate mutase family. BPG-dependent PGAM subfamily. Homodimer.

The catalysed reaction is (2R)-2-phosphoglycerate = (2R)-3-phosphoglycerate. The protein operates within carbohydrate degradation; glycolysis; pyruvate from D-glyceraldehyde 3-phosphate: step 3/5. In terms of biological role, catalyzes the interconversion of 2-phosphoglycerate and 3-phosphoglycerate. This Brucella abortus (strain S19) protein is 2,3-bisphosphoglycerate-dependent phosphoglycerate mutase.